The primary structure comprises 228 residues: Thrombin-like enzyme gyroxin analog (228 aa).

In terms of domain architecture, Peptidase S1 spans 1 to 222 (VIGGDECNIN…YLDWIQSVIA (222 aa)). 6 disulfide bridges follow: Cys7-Cys138, Cys28-Cys44, Cys78-Cys227, Cys117-Cys183, Cys149-Cys162, and Cys173-Cys198. His43 functions as the Charge relay system in the catalytic mechanism. Asn45 and Asn81 each carry an N-linked (GlcNAc...) asparagine glycan. Asp88 acts as the Charge relay system in catalysis. A glycan (N-linked (GlcNAc...) asparagine) is linked at Asn145. Ser177 serves as the catalytic Charge relay system. Asn224 carries N-linked (GlcNAc...) asparagine glycosylation.

It belongs to the peptidase S1 family. Snake venom subfamily. As to quaternary structure, monomer. In terms of tissue distribution, expressed by the venom gland.

It is found in the secreted. The enzyme catalyses Selective cleavage of Arg-|-Xaa bond in fibrinogen, to form fibrin, and release fibrinopeptide A. The specificity of further degradation of fibrinogen varies with species origin of the enzyme.. Its activity is regulated as follows. Inhibited competitively by amidines and guanidines, and irreversibly inhibited by diisopropylfluorophosphate. Its function is as follows. Thrombin-like snake venom serine protease, that cleaves alpha-chain of fibrinogen (FGA) releases only fibrinopeptide A. Shows coagulant, esterase and amidase activities. Induces the barrel rotation syndrome in mice, which is manifested by gyroxin-like, rapid rolling motions. May also reversibly increase the permeability of the blood brain barrier (BBB) in mice. In Lachesis muta muta (Bushmaster), this protein is Thrombin-like enzyme gyroxin analog.